A 1102-amino-acid polypeptide reads, in one-letter code: Protein MMS22-like (1102 aa).

It belongs to the MMS22 family. MMS22L subfamily.

Its subcellular location is the nucleus. The protein resides in the chromosome. Its function is as follows. Involved in recombination-dependent repair of stalled or collapsed replication forks. The polypeptide is Protein MMS22-like (Drosophila melanogaster (Fruit fly)).